We begin with the raw amino-acid sequence, 179 residues long: M-zodatoxin-Lt4b (179 aa).

The N-terminal stretch at 1 to 22 (MKFSIIALALAVAFVCVAESRS) is a signal peptide. Residues 23–43 (EEEGYDVSEEIQAEELEEAAR) constitute a propeptide that is removed on maturation. A Processing quadruplet motif 1 motif is present at residues 40–43 (EAAR). Gln61 bears the Glutamine amide mark. Positions 63–66 (REDS) match the Inverted processing quadruplet motif 1 motif. The propeptide occupies 63–71 (REDSEDAGR). A Processing quadruplet motif 2 motif is present at residues 68–71 (DAGR). Gln89 carries the post-translational modification Glutamine amide. The Inverted processing quadruplet motif 2 motif lies at 91 to 94 (REDT). A propeptide spanning residues 91–99 (REDTEEAGR) is cleaved from the precursor. Positions 96–99 (EAGR) match the Processing quadruplet motif 3 motif. Gln117 is modified (glutamine amide). The Inverted processing quadruplet motif 3 signature appears at 119–122 (REDS). Residues 119 to 127 (REDSEEAGR) constitute a propeptide that is removed on maturation. The Processing quadruplet motif 4 signature appears at 124–127 (EAGR). Gln145 is modified (glutamine amide). Positions 147–150 (REDT) match the Inverted processing quadruplet motif 4 motif. Positions 147-154 (REDTEEAR) are excised as a propeptide. Positions 151 to 154 (EEAR) match the Processing quadruplet motif 5 motif. Residue Phe178 is modified to Phenylalanine amide.

It belongs to the cationic peptide 03 (latarcin) family. 04 subfamily. In terms of processing, cleavage of the propeptide depends on the processing quadruplet motif (PQM) (XXXR, with at least one of X being E) and the inverted PQM (RXXX, with at least one of X being E). Expressed by the venom gland.

The protein resides in the secreted. M-zodatoxin-Lt4b: Has antimicrobial activity against Gram-positive bacteria (A.globiformis VKM Ac-1112 (MIC=0.3 uM), and B.subtilis VKM B-501 (MIC=1.1 uM)), Gram-negative bacteria (E.coli DH5-alpha (MIC=4.4 uM), E.coli MH1 (MIC=4.4 uM), and P.aeruginosa PAO1 (MIC=&gt;35 uM)), and yeasts (P.pastoris GS115 (MIC=&gt;35 uM), and S.cerevisiae Y190 (MIC=35 uM)). Does not have hemolytic activity against rabbit erythrocytes. Causes paralysis, but is not lethal when injected into insect (M.domestica) larvae. Its function is as follows. Shows no antimicrobial activity against Gram-positive bacterium B.subtilis B-501 or Gram-negative bacterium E.coli DH5-alpha at concentration up to 20 uM. The protein is M-zodatoxin-Lt4b of Lachesana tarabaevi (Spider).